The sequence spans 121 residues: Large ribosomal subunit protein bL12 (121 aa).

This sequence belongs to the bacterial ribosomal protein bL12 family. As to quaternary structure, homodimer. Part of the ribosomal stalk of the 50S ribosomal subunit. Forms a multimeric L10(L12)X complex, where L10 forms an elongated spine to which 2 to 4 L12 dimers bind in a sequential fashion. Binds GTP-bound translation factors.

In terms of biological role, forms part of the ribosomal stalk which helps the ribosome interact with GTP-bound translation factors. Is thus essential for accurate translation. This Pseudomonas putida (strain GB-1) protein is Large ribosomal subunit protein bL12.